Here is a 428-residue protein sequence, read N- to C-terminus: G2/mitotic-specific cyclin-B (428 aa).

Belongs to the cyclin family. Cyclin AB subfamily. As to quaternary structure, interacts with the CDC2 protein kinase to form a serine/threonine kinase holoenzyme complex also known as maturation promoting factor (MPF). The cyclin subunit imparts substrate specificity to the complex.

Functionally, essential for the control of the cell cycle at the G2/M (mitosis) transition. The protein is G2/mitotic-specific cyclin-B of Spisula solidissima (Atlantic surf-clam).